The following is a 301-amino-acid chain: Aspartate carbamoyltransferase catalytic subunit (301 aa).

Carbamoyl phosphate contacts are provided by R46 and T47. K74 lines the L-aspartate pocket. Positions 96, 124, and 127 each coordinate carbamoyl phosphate. Residues R157 and R208 each contribute to the L-aspartate site. Carbamoyl phosphate-binding residues include A249 and P250.

This sequence belongs to the aspartate/ornithine carbamoyltransferase superfamily. ATCase family. Heterododecamer (2C3:3R2) of six catalytic PyrB chains organized as two trimers (C3), and six regulatory PyrI chains organized as three dimers (R2).

It catalyses the reaction carbamoyl phosphate + L-aspartate = N-carbamoyl-L-aspartate + phosphate + H(+). It participates in pyrimidine metabolism; UMP biosynthesis via de novo pathway; (S)-dihydroorotate from bicarbonate: step 2/3. Catalyzes the condensation of carbamoyl phosphate and aspartate to form carbamoyl aspartate and inorganic phosphate, the committed step in the de novo pyrimidine nucleotide biosynthesis pathway. This is Aspartate carbamoyltransferase catalytic subunit from Bacillus cereus (strain ATCC 14579 / DSM 31 / CCUG 7414 / JCM 2152 / NBRC 15305 / NCIMB 9373 / NCTC 2599 / NRRL B-3711).